Here is a 143-residue protein sequence, read N- to C-terminus: Large ribosomal subunit protein uL13 (143 aa).

The protein belongs to the universal ribosomal protein uL13 family. Part of the 50S ribosomal subunit.

In terms of biological role, this protein is one of the early assembly proteins of the 50S ribosomal subunit, although it is not seen to bind rRNA by itself. It is important during the early stages of 50S assembly. The polypeptide is Large ribosomal subunit protein uL13 (Clostridioides difficile (strain 630) (Peptoclostridium difficile)).